Consider the following 395-residue polypeptide: uncharacterized protein (395 aa).

This is an uncharacterized protein from Methanocaldococcus jannaschii (strain ATCC 43067 / DSM 2661 / JAL-1 / JCM 10045 / NBRC 100440) (Methanococcus jannaschii).